A 428-amino-acid polypeptide reads, in one-letter code: Chaperone SurA (428 aa).

Residues 1–19 (MNIWKTLLLGMLVTGSAVS) form the signal peptide. PpiC domains follow at residues 170-268 (SVEY…KIED) and 277-377 (VTEV…EVLD).

It is found in the periplasm. It catalyses the reaction [protein]-peptidylproline (omega=180) = [protein]-peptidylproline (omega=0). Its function is as follows. Chaperone involved in the correct folding and assembly of outer membrane proteins. Recognizes specific patterns of aromatic residues and the orientation of their side chains, which are found more frequently in integral outer membrane proteins. May act in both early periplasmic and late outer membrane-associated steps of protein maturation. This Vibrio vulnificus (strain YJ016) protein is Chaperone SurA.